Reading from the N-terminus, the 483-residue chain is Betaine aldehyde dehydrogenase (483 aa).

Residues Ile-27 and Asp-93 each coordinate K(+). 149-151 lines the NAD(+) pocket; the sequence is GAW. Residue Lys-161 is the Charge relay system of the active site. Residue 175-178 coordinates NAD(+); the sequence is KPSE. Position 179 (Val-179) interacts with K(+). Residue 228–231 coordinates NAD(+); sequence SVPT. Residue Val-243 coordinates K(+). Glu-249 functions as the Proton acceptor in the catalytic mechanism. 3 residues coordinate NAD(+): Gly-251, Cys-283, and Glu-380. The active-site Nucleophile is the Cys-283. Position 283 is a cysteine sulfenic acid (-SOH) (Cys-283). The K(+) site is built by Lys-450 and Gly-453. Residue Glu-457 is the Charge relay system of the active site.

Belongs to the aldehyde dehydrogenase family. As to quaternary structure, dimer of dimers. Requires K(+) as cofactor.

The catalysed reaction is betaine aldehyde + NAD(+) + H2O = glycine betaine + NADH + 2 H(+). Its pathway is amine and polyamine biosynthesis; betaine biosynthesis via choline pathway; betaine from betaine aldehyde: step 1/1. In terms of biological role, involved in the biosynthesis of the osmoprotectant glycine betaine. Catalyzes the irreversible oxidation of betaine aldehyde to the corresponding acid. The chain is Betaine aldehyde dehydrogenase from Cereibacter sphaeroides (strain ATCC 17023 / DSM 158 / JCM 6121 / CCUG 31486 / LMG 2827 / NBRC 12203 / NCIMB 8253 / ATH 2.4.1.) (Rhodobacter sphaeroides).